We begin with the raw amino-acid sequence, 874 residues long: Bifunctional uridylyltransferase/uridylyl-removing enzyme (874 aa).

Residues 1–332 (MTLQSPLTFR…NGGASEDAEI (332 aa)) form a uridylyltransferase region. The interval 333-692 (IDEDFQRRGA…ISKKATRGGT (360 aa)) is uridylyl-removing. The HD domain maps to 451–573 (VDEHSIRLLK…VRDEEYLEYL (123 aa)). ACT domains lie at 693–777 (EVFV…RTPN) and 800–874 (LMEF…SVSA).

The protein belongs to the GlnD family. Mg(2+) serves as cofactor.

The enzyme catalyses [protein-PII]-L-tyrosine + UTP = [protein-PII]-uridylyl-L-tyrosine + diphosphate. The catalysed reaction is [protein-PII]-uridylyl-L-tyrosine + H2O = [protein-PII]-L-tyrosine + UMP + H(+). With respect to regulation, uridylyltransferase (UTase) activity is inhibited by glutamine, while glutamine activates uridylyl-removing (UR) activity. In terms of biological role, modifies, by uridylylation and deuridylylation, the PII regulatory proteins (GlnB and homologs), in response to the nitrogen status of the cell that GlnD senses through the glutamine level. Under low glutamine levels, catalyzes the conversion of the PII proteins and UTP to PII-UMP and PPi, while under higher glutamine levels, GlnD hydrolyzes PII-UMP to PII and UMP (deuridylylation). Thus, controls uridylylation state and activity of the PII proteins, and plays an important role in the regulation of nitrogen assimilation and metabolism. The sequence is that of Bifunctional uridylyltransferase/uridylyl-removing enzyme from Vibrio campbellii (strain ATCC BAA-1116).